The chain runs to 463 residues: Hydroxyacid-oxoacid transhydrogenase, mitochondrial (463 aa).

This sequence belongs to the iron-containing alcohol dehydrogenase family. Hydroxyacid-oxoacid transhydrogenase subfamily.

The protein resides in the mitochondrion. It carries out the reaction (S)-3-hydroxybutanoate + 2-oxoglutarate = (R)-2-hydroxyglutarate + acetoacetate. It catalyses the reaction 4-hydroxybutanoate + 2-oxoglutarate = (R)-2-hydroxyglutarate + succinate semialdehyde. Catalyzes the cofactor-independent reversible oxidation of gamma-hydroxybutyrate (GHB) to succinic semialdehyde (SSA) coupled to reduction of 2-ketoglutarate (2-KG) to D-2-hydroxyglutarate (D-2-HG). L-3-hydroxybutyrate (L-3-OHB) is also a substrate for HOT when using 2-KG as hydrogen acceptor, resulting in the formation of D-2-HG. This is Hydroxyacid-oxoacid transhydrogenase, mitochondrial (adhfe1) from Xenopus tropicalis (Western clawed frog).